Reading from the N-terminus, the 542-residue chain is Membrane protein insertase YidC (542 aa).

Transmembrane regions (helical) follow at residues 7–27 (LLVMGLLLVSFLIFTQWQQDF), 338–358 (FALLTFIQSIVTNWGLAIIGV), 417–437 (MGGCLPILIQMPIFIALYWTF), 455–475 (LSAQDPYYILPLLMGASMFLL), and 494–514 (FMPVMFTVFFLWFPSGLVLYW).

The protein belongs to the OXA1/ALB3/YidC family. Type 1 subfamily. In terms of assembly, interacts with the Sec translocase complex via SecD. Specifically interacts with transmembrane segments of nascent integral membrane proteins during membrane integration.

It is found in the cell inner membrane. Required for the insertion and/or proper folding and/or complex formation of integral membrane proteins into the membrane. Involved in integration of membrane proteins that insert both dependently and independently of the Sec translocase complex, as well as at least some lipoproteins. Aids folding of multispanning membrane proteins. In Actinobacillus pleuropneumoniae serotype 3 (strain JL03), this protein is Membrane protein insertase YidC.